Consider the following 1055-residue polypeptide: Type I restriction enzyme HindI endonuclease subunit (1055 aa).

The Helicase ATP-binding domain occupies T287–I468.

Belongs to the HsdR family. As to quaternary structure, the type I restriction/modification system is composed of three polypeptides R, M and S; the restriction enzyme has stoichiometry R(2)M(2)S(1) while the methyltransferase is M(2)S(1).

The enzyme catalyses Endonucleolytic cleavage of DNA to give random double-stranded fragments with terminal 5'-phosphates, ATP is simultaneously hydrolyzed.. Functionally, the restriction (R) subunit of a type I restriction enzyme that recognizes 5'-RAACN(5)TAG-3' and cleaves a random distance away. Subunit R is required for both nuclease and ATPase activities, but not for modification. After locating a non-methylated recognition site, the enzyme complex serves as a molecular motor that translocates DNA in an ATP-dependent manner until a collision occurs that triggers cleavage. The sequence is that of Type I restriction enzyme HindI endonuclease subunit from Haemophilus influenzae (strain ATCC 51907 / DSM 11121 / KW20 / Rd).